The chain runs to 100 residues: Small ribosomal subunit protein uS17 (100 aa).

It belongs to the universal ribosomal protein uS17 family. In terms of assembly, part of the 30S ribosomal subunit.

One of the primary rRNA binding proteins, it binds specifically to the 5'-end of 16S ribosomal RNA. In Erythrobacter litoralis (strain HTCC2594), this protein is Small ribosomal subunit protein uS17.